Reading from the N-terminus, the 578-residue chain is Threonylcarbamoyladenosine tRNA methylthiotransferase (578 aa).

The MTTase N-terminal domain maps to 63 to 171 (QKIWIRTWGC…VVEVVEETIK (109 aa)). [4Fe-4S] cluster-binding residues include Cys-72 and Cys-108. The residue at position 121 (Ser-121) is a Phosphoserine. The [4Fe-4S] cluster site is built by Cys-137, Cys-213, Cys-217, and Cys-220. Residues 199–430 (RKNPLIEIIS…RVFHSYNPYD (232 aa)) form the Radical SAM core domain. Positions 430 to 492 (DHKIGERQQV…KHFLKGQPVS (63 aa)) constitute a TRAM domain. A Phosphothreonine modification is found at Thr-498. The chain crosses the membrane as a helical span at residues 553–570 (CALKVATGLALLALLLHF).

This sequence belongs to the methylthiotransferase family. CDKAL1 subfamily. The cofactor is [4Fe-4S] cluster. As to expression, expressed in pancreas, liver and skeletal muscle, especially in white muscle fibers.

The protein resides in the endoplasmic reticulum membrane. It carries out the reaction N(6)-L-threonylcarbamoyladenosine(37) in tRNA + (sulfur carrier)-SH + AH2 + 2 S-adenosyl-L-methionine = 2-methylsulfanyl-N(6)-L-threonylcarbamoyladenosine(37) in tRNA + (sulfur carrier)-H + 5'-deoxyadenosine + L-methionine + A + S-adenosyl-L-homocysteine + 2 H(+). In terms of biological role, catalyzes the methylthiolation of N6-threonylcarbamoyladenosine (t(6)A), leading to the formation of 2-methylthio-N6-threonylcarbamoyladenosine (ms(2)t(6)A) at position 37 in tRNAs that read codons beginning with adenine. The chain is Threonylcarbamoyladenosine tRNA methylthiotransferase (Cdkal1) from Mus musculus (Mouse).